The chain runs to 391 residues: Protein NirF (391 aa).

It is found in the cytoplasm. In terms of biological role, required for the biosynthesis of heme d1 of nitrite reductase. Could have a dehydrogenase activity yielding sirohydrochlorin from precorrin-2 or dehydrogenation of propionate side chain C17. The polypeptide is Protein NirF (nirF) (Stutzerimonas stutzeri (Pseudomonas stutzeri)).